A 225-amino-acid polypeptide reads, in one-letter code: Protein-L-isoaspartate O-methyltransferase (225 aa).

Residue Ser-75 is part of the active site.

The protein belongs to the methyltransferase superfamily. L-isoaspartyl/D-aspartyl protein methyltransferase family.

Its subcellular location is the cytoplasm. It catalyses the reaction [protein]-L-isoaspartate + S-adenosyl-L-methionine = [protein]-L-isoaspartate alpha-methyl ester + S-adenosyl-L-homocysteine. Functionally, catalyzes the methyl esterification of L-isoaspartyl residues in peptides and proteins that result from spontaneous decomposition of normal L-aspartyl and L-asparaginyl residues. It plays a role in the repair and/or degradation of damaged proteins. The protein is Protein-L-isoaspartate O-methyltransferase of Xylella fastidiosa (strain M23).